Here is a 422-residue protein sequence, read N- to C-terminus: NADP-dependent malic enzyme (422 aa).

The active-site Proton donor is the tyrosine 39. Residue lysine 94 is the Proton acceptor of the active site. Lysine 94 contacts substrate. A divalent metal cation is bound by residues glutamate 136, aspartate 137, and aspartate 162. Residues 195–198, asparagine 286, and asparagine 318 contribute to the NADP(+) site; that span reads AGAA. A substrate-binding site is contributed by asparagine 318.

This sequence belongs to the malic enzymes family. The cofactor is Mg(2+). Requires Mn(2+) as cofactor.

It catalyses the reaction (S)-malate + NADP(+) = pyruvate + CO2 + NADPH. The enzyme catalyses oxaloacetate + H(+) = pyruvate + CO2. The protein is NADP-dependent malic enzyme of Halomonas elongata (strain ATCC 33173 / DSM 2581 / NBRC 15536 / NCIMB 2198 / 1H9).